Here is a 3902-residue protein sequence, read N- to C-terminus: Hybrid PKS-NRPS synthetase pynA (3902 aa).

The interval 1-25 (MDTPLSSSEISPRFSNTVPSSVSSM) is disordered. The Ketosynthase family 3 (KS3) domain occupies 29 to 441 (ADPSVIVGLA…GTNAHVILDA (413 aa)). Residues Cys201, His324, and His362 each act as for beta-ketoacyl synthase activity in the active site. The segment at 555 to 868 (VFTGQGAQWF…PYLASLTRGV (314 aa)) is malonyl-CoA:ACP transacylase (MAT) domain. Ser647 functions as the For malonyltransferase activity in the catalytic mechanism. An N-terminal hotdog fold region spans residues 945–1080 (HSILGARMPG…GLVSVETNAL (136 aa)). The interval 945 to 1256 (HSILGARMPG…LEVTALGSDK (312 aa)) is dehydratase (DH) domain. Positions 945-1258 (HSILGARMPG…VTALGSDKTD (314 aa)) constitute a PKS/mFAS DH domain. His977 (proton acceptor; for dehydratase activity) is an active-site residue. The C-terminal hotdog fold stretch occupies residues 1100–1258 (QESIPAETLY…VTALGSDKTD (159 aa)). Residue Asp1164 is the Proton donor; for dehydratase activity of the active site. An enoyl reductase (ER) domain region spans residues 1629–1945 (GLLETLVFED…MGKHTGKVVL (317 aa)). Residues 1971–2143 (TYLLVGGLGG…AGTTMNCGMI (173 aa)) are ketoreductase (KR) domain. One can recognise a Carrier 1 domain in the interval 2251–2328 (ERTTLVLSAF…ALVTKASGLI (78 aa)). Ser2288 carries the O-(pantetheine 4'-phosphoryl)serine modification. A compositionally biased stretch (basic and acidic residues) spans 2337–2350 (KAENVDNEGAKGNE). Positions 2337-2364 (KAENVDNEGAKGNEDQEVETQQGQLNQP) are disordered. The tract at residues 2374 to 2816 (VPMSSFQQRL…AEVNLCGALE (443 aa)) is condensation (C) domain 7. The tract at residues 2836–3248 (SVGVCQRIME…NGLLTFKGRI (413 aa)) is adenylation (A) domain 8. A Carrier 2 domain is found at 3391 to 3467 (GDDAEILQGV…AIAGMIQKQL (77 aa)). The residue at position 3427 (Ser3427) is an O-(pantetheine 4'-phosphoryl)serine. A thioesterase (TE) domain region spans residues 3515–3774 (LTGIDTFIGL…VDFLPVDALT (260 aa)).

In the C-terminal section; belongs to the NRP synthetase family.

It participates in secondary metabolite biosynthesis. Hybrid PKS-NRPS synthetase; part of the gene cluster that mediates the biosynthesis of pyranonigrins, a family of antioxidative compounds. The first step of pyranonigrins biosynthesis is performed by the hybrid PKS-NRPS synthetase that condenses 6 malonyl-CoA units to an acetyl starter unit, to form a 1,3,5-trioxotetradecane-6,8-dienyl-ACP. The enoyl reductase (ER) domain of pynA is likely to be functional during the first two rounds of polyketide chain extension, to generate the saturated C-C bonds of the alkyl side chain. PynA subsequently forms the amide bond between the acyl chain and L-serine. Although pynA has a terminal reductase domain, it appears to require the thioesterase pynI for the release of the straight-chain intermediate from pynA via the formation of a tetramic acid pyranonigrin J. The methyltransferase pynC then coverts pyranonigrin J to pyranonigrin I via N-methylation. The FAD-dependent monooxygenase pynG catalyzes an epoxidation-mediated cyclization to form the dihydro-gamma-pyrone moiety, followed by pynD-catalyzed oxidation of the alcohol to the ketone and enolization to yield the characteristic tetramic acid-fused gamma-pyrone core of pyranonigrin H. Pyranonigrin H is substrate of pynH for dehydration-mediated exo-methylene formation from the serine side chain to produce pyranonigrin E, before the oxidase pynE reduces the exo-methylene of pyranonigrin E into a pendant methyl to form pyranonigrin G. The FAD-linked oxidoreductase pynB performs the reverse reaction and converts pyranonigrin G back to pyranonigrin E. The protein is Hybrid PKS-NRPS synthetase pynA of Aspergillus niger (strain ATCC MYA-4892 / CBS 513.88 / FGSC A1513).